Consider the following 214-residue polypeptide: Probable nicotinate-nucleotide adenylyltransferase (214 aa).

This sequence belongs to the NadD family.

It catalyses the reaction nicotinate beta-D-ribonucleotide + ATP + H(+) = deamido-NAD(+) + diphosphate. It functions in the pathway cofactor biosynthesis; NAD(+) biosynthesis; deamido-NAD(+) from nicotinate D-ribonucleotide: step 1/1. In terms of biological role, catalyzes the reversible adenylation of nicotinate mononucleotide (NaMN) to nicotinic acid adenine dinucleotide (NaAD). This Mycobacterium tuberculosis (strain ATCC 25177 / H37Ra) protein is Probable nicotinate-nucleotide adenylyltransferase.